The chain runs to 351 residues: UDP-N-acetylenolpyruvoylglucosamine reductase (351 aa).

The FAD-binding PCMH-type domain occupies 25-196 (HIQAQARWLL…AAVEFRLPLL (172 aa)). Arg173 is a catalytic residue. Ser246 functions as the Proton donor in the catalytic mechanism. The active site involves Glu343.

It belongs to the MurB family. The cofactor is FAD.

It is found in the cytoplasm. The enzyme catalyses UDP-N-acetyl-alpha-D-muramate + NADP(+) = UDP-N-acetyl-3-O-(1-carboxyvinyl)-alpha-D-glucosamine + NADPH + H(+). Its pathway is cell wall biogenesis; peptidoglycan biosynthesis. Functionally, cell wall formation. The sequence is that of UDP-N-acetylenolpyruvoylglucosamine reductase from Xylella fastidiosa (strain 9a5c).